We begin with the raw amino-acid sequence, 368 residues long: Endoglucanase (368 aa).

The N-terminal stretch at 1-21 is a signal peptide; it reads MNVLRSGIVTMLLLAAFSVQA. The active-site Proton donor is Glu55. Asp116 acts as the Nucleophile in catalysis.

The protein belongs to the glycosyl hydrolase 8 (cellulase D) family.

The protein resides in the secreted. It carries out the reaction Endohydrolysis of (1-&gt;4)-beta-D-glucosidic linkages in cellulose, lichenin and cereal beta-D-glucans.. The protein operates within glycan metabolism; bacterial cellulose biosynthesis. In terms of biological role, hydrolyzes carboxymethylcellulose. This chain is Endoglucanase (bcsZ), found in Escherichia coli (strain K12).